Here is a 225-residue protein sequence, read N- to C-terminus: Thymidine kinase (225 aa).

15-22 is a binding site for ATP; that stretch reads GSMFSGKT. The tract at residues 85–110 is disordered; the sequence is KKQNHRTTTQCRSGDGTNNPGGVIPS. Over residues 90–104 the composition is skewed to polar residues; the sequence is RTTTQCRSGDGTNNP. 121 to 124 provides a ligand contact to ATP; that stretch reads DEAN. Glu-122 functions as the Proton acceptor in the catalytic mechanism. Zn(2+)-binding residues include Cys-178, Cys-181, Cys-216, and Cys-219.

It belongs to the thymidine kinase family. Homotetramer.

The protein resides in the cytoplasm. It catalyses the reaction thymidine + ATP = dTMP + ADP + H(+). The sequence is that of Thymidine kinase from Haloquadratum walsbyi (strain DSM 16790 / HBSQ001).